A 177-amino-acid chain; its full sequence is von Ebner gland protein 1 (177 aa).

The signal sequence occupies residues 1-18; sequence MKALLLTFGLSLLAALQA. Cysteines 80 and 172 form a disulfide.

Belongs to the calycin superfamily. Lipocalin family. As to quaternary structure, homodimer.

It localises to the secreted. Its function is as follows. Could play a role in taste reception. Could be necessary for the concentration and delivery of sapid molecules in the gustatory system. The chain is von Ebner gland protein 1 (Vegp1) from Rattus norvegicus (Rat).